Consider the following 181-residue polypeptide: Large ribosomal subunit protein uL6 (181 aa).

Belongs to the universal ribosomal protein uL6 family. Part of the 50S ribosomal subunit.

This protein binds to the 23S rRNA, and is important in its secondary structure. It is located near the subunit interface in the base of the L7/L12 stalk, and near the tRNA binding site of the peptidyltransferase center. This Lawsonia intracellularis (strain PHE/MN1-00) protein is Large ribosomal subunit protein uL6.